We begin with the raw amino-acid sequence, 431 residues long: Histidinol dehydrogenase (431 aa).

Residues tyrosine 127, glutamine 189, and asparagine 212 each coordinate NAD(+). Positions 237, 259, and 262 each coordinate substrate. Glutamine 259 and histidine 262 together coordinate Zn(2+). Residues glutamate 326 and histidine 327 each act as proton acceptor in the active site. Substrate is bound by residues histidine 327, aspartate 360, glutamate 414, and histidine 419. Aspartate 360 provides a ligand contact to Zn(2+). Histidine 419 is a Zn(2+) binding site.

Belongs to the histidinol dehydrogenase family. The cofactor is Zn(2+).

It catalyses the reaction L-histidinol + 2 NAD(+) + H2O = L-histidine + 2 NADH + 3 H(+). The protein operates within amino-acid biosynthesis; L-histidine biosynthesis; L-histidine from 5-phospho-alpha-D-ribose 1-diphosphate: step 9/9. In terms of biological role, catalyzes the sequential NAD-dependent oxidations of L-histidinol to L-histidinaldehyde and then to L-histidine. In Xylella fastidiosa (strain Temecula1 / ATCC 700964), this protein is Histidinol dehydrogenase.